We begin with the raw amino-acid sequence, 125 residues long: Prepro-urotensin II-alpha (125 aa).

The signal sequence occupies residues 1-21 (MMCNLLLSFSVLLLSCTHLVA). Positions 109 to 111 (QFR) are excised as a propeptide. Cys-119 and Cys-124 are joined by a disulfide.

It belongs to the urotensin-2 family.

It localises to the secreted. Urotensin is found in the teleost caudal neurosecretory system. It has a suggested role in osmoregulation and as a corticotropin-releasing factor. The non-hormonal portion of this precursor may be a urotensin binding protein, urophysin. The sequence is that of Prepro-urotensin II-alpha from Cyprinus carpio (Common carp).